We begin with the raw amino-acid sequence, 911 residues long: DNA ligase 4 (911 aa).

Glu271, Thr272, Lys273, Leu274, Arg278, Glu331, Lys345, Phe367, Glu427, Lys432, Lys449, and Lys451 together coordinate ATP. Lys273 serves as the catalytic N6-AMP-lysine intermediate. Glu331 contributes to the Mg(2+) binding site. Glu427 lines the Mg(2+) pocket. The segment at Leu610–Asp620 is required for catalytic activity. BRCT domains follow at residues Lys654–Met743 and Ser808–Ile911.

The protein belongs to the ATP-dependent DNA ligase family. Interacts with XRCC4; the LIG4-XRCC4 subcomplex has a 1:2 stoichiometry and XRCC4 is required for LIG4 stability. Component of the core long-range non-homologous end joining (NHEJ) complex (also named DNA-PK complex) composed of PRKDC, LIG4, XRCC4, XRCC6/Ku70, XRCC5/Ku86 and NHEJ1/XLF. Additional component of the NHEJ complex includes PAXX. Following autophosphorylation, PRKDC dissociates from DNA, leading to formation of the short-range NHEJ complex, composed of LIG4, XRCC4, XRCC6/Ku70, XRCC5/Ku86 and NHEJ1/XLF. Interacts with DCLRE1C; the interaction is direct. Interacts with APLF. It depends on Mg(2+) as a cofactor.

The protein localises to the nucleus. It carries out the reaction ATP + (deoxyribonucleotide)n-3'-hydroxyl + 5'-phospho-(deoxyribonucleotide)m = (deoxyribonucleotide)n+m + AMP + diphosphate.. In terms of biological role, DNA ligase involved in DNA non-homologous end joining (NHEJ); required for double-strand break (DSB) repair and V(D)J recombination. Catalyzes the NHEJ ligation step of the broken DNA during DSB repair by resealing the DNA breaks after the gap filling is completed. Joins single-strand breaks in a double-stranded polydeoxynucleotide in an ATP-dependent reaction. LIG4 is mechanistically flexible: it can ligate nicks as well as compatible DNA overhangs alone, while in the presence of XRCC4, it can ligate ends with 2-nucleotides (nt) microhomology and 1-nt gaps. Forms a subcomplex with XRCC4; the LIG4-XRCC4 subcomplex is responsible for the NHEJ ligation step and XRCC4 enhances the joining activity of LIG4. Binding of the LIG4-XRCC4 complex to DNA ends is dependent on the assembly of the DNA-dependent protein kinase complex DNA-PK to these DNA ends. LIG4 regulates nuclear localization of XRCC4. The polypeptide is DNA ligase 4 (Pongo abelii (Sumatran orangutan)).